The following is a 479-amino-acid chain: MRFYAVGLNHECTSLEQTETFALSAEEQEALYANLSLSADAEVVVLSTCNRTEAYLYGTEADLRQVKALIGQGGGTRWPEETAFQERDEAAVRHLLQVTSGLRSVVLGERQIFAQVKAAYERAVDAGGIHSVMHRLFHTAFRAAKRVSSETGLGRGAASVSTAAVEMARQDLSEAGGEGLRNTEIVLVGAGKMGRLALEALADESLASLTVVNRSPDRAREVASPFGGDTEPWADRHRAVATADLALVATGASDPVLHAPALPAPDEATLVVDVAMPRNVDPAVDERPGYRLYDLDDLEAWTAEVRERRADAVPEAESICEELLEDFVTWVFHQQALQPAIQAIRSTFDTIREQEVDRHAHRTGMDREEVDRLTESIMQKLLAVPIVRLKNVDPESIDFVQGIELLHALFAPSDESDAGRSLAEAPDADTPDLGEAPSRCPYMTHDPGGDGTETEEVQKALRLSAAHQAASHSEEVRGG.

Residues 48 to 51, serine 104, 109 to 111, and glutamine 115 contribute to the substrate site; these read TCNR and ERQ. Cysteine 49 (nucleophile) is an active-site residue. NADP(+) is bound at residue 189–194; it reads GAGKMG. The segment at 417 to 455 is disordered; the sequence is DAGRSLAEAPDADTPDLGEAPSRCPYMTHDPGGDGTETE.

The protein belongs to the glutamyl-tRNA reductase family. Homodimer.

The enzyme catalyses (S)-4-amino-5-oxopentanoate + tRNA(Glu) + NADP(+) = L-glutamyl-tRNA(Glu) + NADPH + H(+). Its pathway is porphyrin-containing compound metabolism; protoporphyrin-IX biosynthesis; 5-aminolevulinate from L-glutamyl-tRNA(Glu): step 1/2. In terms of biological role, catalyzes the NADPH-dependent reduction of glutamyl-tRNA(Glu) to glutamate 1-semialdehyde (GSA). The chain is Glutamyl-tRNA reductase from Salinibacter ruber (strain DSM 13855 / M31).